The primary structure comprises 414 residues: MNKNQKPVLTGQRFKTRKRDEKEKFEPTVFRDTIVQGLNEAGSDLEAIAKFLDSAGSRLDYRRYADTLFDILVAGSMLAPGGTRIDDNDKTKMTRHCVFFAEEDHDAIRNYAQVFNKLIRRYKYLEKAFEDEIKKLLLFLKAFSETEQTKLAMLSGILLANGTLPATILTSLFTDNIVKEGIAASFAVKLFKAWMAEKDANSVTSALRKANLDKRLLELFPANRQNVDHFAKYFTEAGLKELSDFLRVQQSLGTRKELQKELQERLSQECPIKEMVLYVKEEMKRNELPEPAVIGLLWTCVMNAVEWNKKEELVAEQALKHLKQYAPLLAVFSTQGQSELILLQKVQEYCYDNIHFMKAFQKIVVLFYKADVLSEEAILKWYKEAHVAKGKSVFLDQMKKFVEWLQNAEEEFRI.

Positions 1–22 (MNKNQKPVLTGQRFKTRKRDEK) are disordered. The W2 domain occupies 248-414 (VQQSLGTRKE…LQNAEEEFRI (167 aa)).

Belongs to the BZW family.

It is found in the cytoplasm. Translation initiation regulator which may repress non-AUG initiated translation and repeat-associated non-AUG (RAN) initiated translation by acting as a competitive inhibitor of eukaryotic translation initiation factor 5 (EIF5) function. The protein is eIF5-mimic protein 1 (BZW2) of Gallus gallus (Chicken).